The sequence spans 1507 residues: DE-cadherin (1507 aa).

The N-terminal stretch at 1 to 69 (MSTSVQRMSR…AISLLSPALA (69 aa)) is a signal peptide. Residues 70 to 261 (LHSPPDKNFS…IYLKRPIDKR (192 aa)) constitute a propeptide that is removed on maturation. 7 Cadherin domains span residues 97–195 (VKEE…APAF), 204–301 (MSEN…PPSF), 311–412 (LKEN…IPYY), 420–522 (ILEN…KPHF), 532–633 (LLED…TILE), 631–733 (ILEE…APFL), and 741–835 (WQEN…NDNA). Residues 262-1328 (PGQSYAIIVR…VAFSFGIDRN (1067 aa)) lie on the Extracellular side of the membrane. Asn317, Asn466, and Asn552 each carry an N-linked (GlcNAc...) asparagine glycan. Asn766, Asn949, Asn983, Asn999, and Asn1073 each carry an N-linked (GlcNAc...) asparagine glycan. One can recognise an EGF-like domain in the interval 1084-1123 (VQAQCVCEAPLMRRCLNGGSPRYGENDVCDCIDGFTGPHC). Disulfide bonds link Cys1098-Cys1112 and Cys1114-Cys1123. The Laminin G-like domain occupies 1125–1313 (LVSVAFYGSG…SVFRNIDSGC (189 aa)). N-linked (GlcNAc...) asparagine glycans are attached at residues Asn1145, Asn1274, and Asn1290. A disulfide bridge links Cys1287 with Cys1313. Residues 1329–1349 (FIIAIIVCLALLLIILLAVVV) form a helical membrane-spanning segment. Residues 1350 to 1507 (QKKQKNGWHE…NVDDDQGWRI (158 aa)) are Cytoplasmic-facing. The segment at 1350 to 1507 (QKKQKNGWHE…NVDDDQGWRI (158 aa)) is interaction with Inx2. Residues 1488-1507 (YGEEPSDTDSNVDDDQGWRI) are disordered. The residue at position 1493 (Ser1493) is a Phosphoserine.

Interacts (via cytoplasmic region) with Inx2 (via cytoplasmic loop). Interacts with Hakai. Interacts with Myo31DF. Post-translationally, N-glycosylation is important for biosynthesis and function. As to expression, in early stage 9 and stage 10 oocytes, expressed in border cells, strongly expressed in polar cells and very weakly expressed in the nurse cells (at protein level). In the embryo, expressed in the leading edge cells of the dorsal epidermis (at protein level). Stage 10 embryos exhibit intense expression in epithelial cells. Stage 14 embryos show expression in the hindgut (at the apical poles of cell-cell boundaries), at the apical junctions of tracheal cells and in the dorsal longitudinal trunk. In stage 16 embryos the glial midline cells of the central nervous system show strong expression.

Its subcellular location is the cell membrane. It localises to the apical cell membrane. Cadherins are calcium-dependent cell adhesion proteins. In connecting cells they preferentially interact with themselves in a homophilic manner; cadherins may thus contribute to the sorting of heterogeneous cell types. During oogenesis, integral component of the guidance mechanisms that regulate the directional persistent collective migration of the border cell (BC) cluster through the nurse cells to the oocyte. Functions downstream of the two chemoattractant receptors, Pvr and Egfr, to promote BC adhesion between the leader cells of the migrating cluster and the surrounding nurse cells. This adhesion increases Rac1 signaling in the leading cells, which in turn stabilizes DE-cadherin/DE-cadherin adhesions through the formation of forward-directed protrusions which attach/detach to the surrounding nurse cells in order to pull the cluster through the egg chamber to the oocyte. Within the BC cluster, also promotes adhesion between BCs, and between BCs and polar cells which enables the lead BC to communicate direction to the other cells in the cluster, providing polarity to each individual cell and ensuring collective behavior. May function in cell intercalation in the lateral epidermis during germband extension. Contributes to the determination of body left-right asymmetry by enhancing Myo31DF activity and inhibiting Myo61F activity. In Drosophila melanogaster (Fruit fly), this protein is DE-cadherin.